The sequence spans 156 residues: UPF0266 membrane protein YobD (156 aa).

Residues 1–5 (MTITD) are Periplasmic-facing. A helical transmembrane segment spans residues 6-26 (LVLILFIAALLAYALYDQFIM). The Cytoplasmic portion of the chain corresponds to 27–44 (PRRNGPTLLSIALLRRGR). The chain crosses the membrane as a helical span at residues 45–65 (VDSVIFVGLVAILIYNNVTSH). Position 66 (G66) is a topological domain, periplasmic. A helical transmembrane segment spans residues 67-87 (AQMTTWLLSALALMGFYIFWI). Residues 88–156 (RTPRIIFKQR…LLIENQYLKI (69 aa)) lie on the Cytoplasmic side of the membrane.

It belongs to the UPF0266 family.

It is found in the cell inner membrane. The protein is UPF0266 membrane protein YobD (yobD) of Salmonella typhimurium (strain LT2 / SGSC1412 / ATCC 700720).